The primary structure comprises 1441 residues: Envelopment polyprotein (1441 aa).

The first 13 residues, 1-13, serve as a signal peptide directing secretion; it reads MICILVLITVAAA. Over 14–200 the chain is Lumenal; it reads SPVYQRCFQD…GSIANSICQN (187 aa). Asn-57 carries N-linked (GlcNAc...) asparagine; by host glycosylation. The segment at 201–221 is a transmembrane helix; it reads IEIIILVTLTLLIFILLSILS. Residues 222-305 lie on the Cytoplasmic side of the membrane; it reads KTYICYLLMP…RAARVMCKSK (84 aa). A membrane pass occupies residues 306–326; the sequence is GPASILSIITAVLVLTFVTPI. The Lumenal portion of the chain corresponds to 327–361; the sequence is NSMVLGESKETFELEDLPDDMLEMASRINSYYLTC. A transmembrane helix spans residues 362–382; the sequence is ILNYAVSWGLVIIGLLIGLLF. The Cytoplasmic segment spans residues 383–450; it reads KKYQHRFLNV…NCLVQYKAKW (68 aa). The chain crosses the lipid bilayer at residues 451 to 471; the sequence is MMNFLIIYIFLILIKDSAIVV. The Lumenal portion of the chain corresponds to 472-1395; that stretch reads QAAGTDFTTC…EPFKNLFGSY (924 aa). N-linked (GlcNAc...) asparagine; by host glycosylation occurs at Asn-490. A fusion peptide region spans residues 1066–1087; the sequence is WGCEEFGCLAVSDGCVFGSCQD. The N-linked (GlcNAc...) asparagine; by host glycan is linked to Asn-1177. Over 1396–1416 the chain traverses the membrane; that stretch reads IGIFYTFIISIVVLLVIIYVL. The Cytoplasmic portion of the chain corresponds to 1417–1433; sequence LPICFKLRDTLRKHEDA.

It belongs to the orthobunyaviruses M polyprotein family. Glycoprotein C and Glycoprotein N interact with each other.

Its subcellular location is the virion membrane. The protein localises to the host Golgi apparatus membrane. It is found in the host endoplasmic reticulum membrane. In terms of biological role, glycoprotein C and glycoprotein N interact with each other and are present at the surface of the virion. They are able to attach the virion to a cell receptor and to promote fusion of membranes after endocytosis of the virion. In Bunyavirus La Crosse (isolate Human/United States/L78/1978), this protein is Envelopment polyprotein (GP).